A 591-amino-acid polypeptide reads, in one-letter code: Aspartate--tRNA(Asp/Asn) ligase (591 aa).

Residue Glu-176 coordinates L-aspartate. An aspartate region spans residues 200-203 (QLFK). Arg-222 contributes to the L-aspartate binding site. Residues 222–224 (RDE) and Gln-231 each bind ATP. Residue His-450 coordinates L-aspartate. Glu-484 lines the ATP pocket. L-aspartate is bound at residue Arg-491. Position 536-539 (536-539 (GLDR)) interacts with ATP.

This sequence belongs to the class-II aminoacyl-tRNA synthetase family. Type 1 subfamily. In terms of assembly, homodimer.

It localises to the cytoplasm. It catalyses the reaction tRNA(Asx) + L-aspartate + ATP = L-aspartyl-tRNA(Asx) + AMP + diphosphate. In terms of biological role, aspartyl-tRNA synthetase with relaxed tRNA specificity since it is able to aspartylate not only its cognate tRNA(Asp) but also tRNA(Asn). Reaction proceeds in two steps: L-aspartate is first activated by ATP to form Asp-AMP and then transferred to the acceptor end of tRNA(Asp/Asn). In Bacillus cereus (strain ATCC 14579 / DSM 31 / CCUG 7414 / JCM 2152 / NBRC 15305 / NCIMB 9373 / NCTC 2599 / NRRL B-3711), this protein is Aspartate--tRNA(Asp/Asn) ligase.